Reading from the N-terminus, the 420-residue chain is Gamma-glutamyl phosphate reductase (420 aa).

The protein belongs to the gamma-glutamyl phosphate reductase family.

It localises to the cytoplasm. The catalysed reaction is L-glutamate 5-semialdehyde + phosphate + NADP(+) = L-glutamyl 5-phosphate + NADPH + H(+). The protein operates within amino-acid biosynthesis; L-proline biosynthesis; L-glutamate 5-semialdehyde from L-glutamate: step 2/2. Its function is as follows. Catalyzes the NADPH-dependent reduction of L-glutamate 5-phosphate into L-glutamate 5-semialdehyde and phosphate. The product spontaneously undergoes cyclization to form 1-pyrroline-5-carboxylate. The sequence is that of Gamma-glutamyl phosphate reductase from Acidiphilium cryptum (strain JF-5).